The sequence spans 224 residues: PKHD-type hydroxylase HNE_1625 (224 aa).

One can recognise a Fe2OG dioxygenase domain in the interval lysine 77–serine 175. Histidine 95, aspartate 97, and histidine 156 together coordinate Fe cation. Arginine 166 provides a ligand contact to 2-oxoglutarate.

Fe(2+) serves as cofactor. The cofactor is L-ascorbate.

This is PKHD-type hydroxylase HNE_1625 from Hyphomonas neptunium (strain ATCC 15444).